The following is a 275-amino-acid chain: Prohibitin-1 (275 aa).

Positions 106-109 match the AIM motif; sequence YQNL.

It belongs to the prohibitin family. The mitochondrial prohibitin complex consists of two subunits (PHB1 and PHB2). The subunits assemble into a membrane-associated ring-shaped supercomplex of approximately 1 mDa. Interacts with ATG24/SNX4; the interaction is direct and plays a role in mitophagy.

The protein resides in the mitochondrion inner membrane. Functionally, prohibitin probably acts as a holdase/unfoldase for the stabilization of newly synthesized mitochondrial proteins. Involved in mitophagy. Required for the switch to necrotrophic growth. This Colletotrichum higginsianum (strain IMI 349063) (Crucifer anthracnose fungus) protein is Prohibitin-1.